The chain runs to 194 residues: ATP-dependent Clp protease proteolytic subunit (194 aa).

S98 (nucleophile) is an active-site residue. H123 is a catalytic residue.

This sequence belongs to the peptidase S14 family. As to quaternary structure, fourteen ClpP subunits assemble into 2 heptameric rings which stack back to back to give a disk-like structure with a central cavity, resembling the structure of eukaryotic proteasomes.

The protein resides in the cytoplasm. It carries out the reaction Hydrolysis of proteins to small peptides in the presence of ATP and magnesium. alpha-casein is the usual test substrate. In the absence of ATP, only oligopeptides shorter than five residues are hydrolyzed (such as succinyl-Leu-Tyr-|-NHMec, and Leu-Tyr-Leu-|-Tyr-Trp, in which cleavage of the -Tyr-|-Leu- and -Tyr-|-Trp bonds also occurs).. Functionally, cleaves peptides in various proteins in a process that requires ATP hydrolysis. Has a chymotrypsin-like activity. Plays a major role in the degradation of misfolded proteins. The chain is ATP-dependent Clp protease proteolytic subunit from Clostridium kluyveri (strain NBRC 12016).